The chain runs to 692 residues: Transforming growth factor beta activator LRRC33 (692 aa).

The first 18 residues, 1 to 18 (MELLPLWLCLGFHFLTVG), serve as a signal peptide directing secretion. Residues 19 to 650 (WRNRSGTATA…CKWERLDLGL (632 aa)) are Extracellular-facing. The N-linked (GlcNAc...) asparagine glycan is linked to asparagine 21. An LRRNT domain is found at 29-56 (ASQGVCKLVGGAADCRGQSLASVPSSLP). LRR repeat units follow at residues 58–79 (HARMLTLDANPLKTLWNHSLQP), 82–103 (LLESLSLHSCHLERISRGAFQE), 106–127 (HLRSLVLGDNCLSENYEETAAA), 133–155 (GLRRLDLSGNALTEDMAALMLQN), 158–179 (SLRSVSLAGNTIMRLDDSVFEG), 182–203 (RLRELDLQRNYIFEIEGGAFDG), 206–227 (ELRHLNLAFNNLPCIVDFGLTR), 228–239 (LRVLNVSYNVLE), 251–272 (ELETLDLSHNQLLFFPLLPQYS), and 273–294 (KLRTLLLRDNNMGFYRDLYNTS). Residue asparagine 74 is glycosylated (N-linked (GlcNAc...) asparagine). Residue asparagine 155 is glycosylated (N-linked (GlcNAc...) asparagine). N-linked (GlcNAc...) asparagine glycosylation is present at asparagine 232. N-linked (GlcNAc...) asparagine glycans are attached at residues asparagine 292, asparagine 309, and asparagine 312. LRR repeat units follow at residues 329–350 (DLRFLDMSQNQFQYLPDGFLRK), 353–374 (SLSHLNLHQNCLMTLHIREHEP), 377–398 (ALTELDLSHNQLSELHLAPGLA), 403–424 (SLRLFNLSSNQLLGVPPGLFAN), 427–447 (NITTLDMSHNQISLCPLPAAS), 463–484 (SLRSLSLEGCGLGALPDCPFQG), 486–507 (SLTYLDLSSNWGVLNGSLAPLQ), 512–534 (MLQVLSLRNMGLHSSFMALDFSG), 537–558 (NLRDLDLSGNCLTTFPRFGGSL), 559–580 (ALETLDLRRNSLTALPQKAVSE), and 585–594 (GLRTIYLSQN). N-linked (GlcNAc...) asparagine glycosylation is found at asparagine 408 and asparagine 427. Asparagine 500 carries N-linked (GlcNAc...) asparagine glycosylation. The LRRCT domain maps to 595-643 (PYDCCGVDGWGALQHGQTVADWAMVTCNLSSKIIRVTELPGGVPRDCKW). Asparagine 622 is a glycosylation site (N-linked (GlcNAc...) asparagine). Residues 651–671 (LYLVLILPSCLTLLVACTVIV) form a helical membrane-spanning segment. The Cytoplasmic segment spans residues 672 to 692 (LTFKKPLLQVIKSRCHWSSVY).

The protein belongs to the LRRC32/LRRC33 family. Interacts with TGFB1; associates via disulfide bonds with the Latency-associated peptide chain (LAP) regulatory chain of TGFB1, leading to regulate activation of TGF-beta-1. Interacts (via LRR repeats) with TLR2, TLR3, TLR4, TLR9 and probably other Toll-like receptors. Interacts with CYBB/NOX2; the interaction is direct. In terms of tissue distribution, mainly expressed in cells of hematopoietic origin. Highly expressed in bone marrow, thymus, liver, lung, intestine and spleen. In the brain, highly expressed in microglia.

It localises to the cell membrane. The protein localises to the endoplasmic reticulum membrane. In terms of biological role, key regulator of transforming growth factor beta-1 (TGFB1) specifically required for microglia function in the nervous system. Required for activation of latent TGF-beta-1 in macrophages and microglia: associates specifically via disulfide bonds with the Latency-associated peptide (LAP), which is the regulatory chain of TGFB1, and regulates integrin-dependent activation of TGF-beta-1. TGF-beta-1 activation mediated by LRRC33/NRROS is highly localized: there is little spreading of TGF-beta-1 activated from one microglial cell to neighboring microglia, suggesting the existence of localized and selective activation of TGF-beta-1 by LRRC33/NRROS. Indirectly plays a role in Toll-like receptor (TLR) signaling: ability to inhibit TLR-mediated NF-kappa-B activation and cytokine production is probably a consequence of its role in TGF-beta-1 signaling. This Homo sapiens (Human) protein is Transforming growth factor beta activator LRRC33.